The sequence spans 1434 residues: MQNNKNYTEKFITDKVTRRDYSKIKSNFEGPNLLEIQVESFKRFMEKDLKEVISGIFPLKSPQGKYTLAFKGLKIKQPTKDESACRDEGKTFETPIYIDLELTDNYTGEVKRAQRNAKTGEDGIYLGAIPKMTEKGTFVINGIEKFVISQIVRSPGIYVLGKSSIKLNGSRKRLFEGKICEIYPSKGTLMLGYIPKDRHNIQIVARDSSGDNAQTFSITTLLKAFGLTSAEILKIFNNEKEIRESLEVEKYSPEYIFENSQENEIIFKIYSDAHDIHEKADRRESNNKLREEYIEQGSPLLSKLKELIFDYVEKSDEIDALLHENKDVEDANFIKNNKKLYDEREEIINCIISEKAAKDIVELLGINIKNVETLRHLGKASYQLALQQHFFNKRLYDISSAGRYKFEKKLLLSERLYQKVIARDIIDKKNNILIPKDTLITKEHIELIKKESRDKNIKWTRKINLLPIALETEIEQFLEYESIAVYKDNDLRDETTEIVGLAPGCKLQTLTVADLVATTSYIYNLNYEIGEFDDIDHLGNKRLKLIHELLRARIATSMARIEKFINEKLAISDGSSNNITNVNDKGIDTELDREVEESDMSDEEKKKAISVKSIINTKQFQSLVKDFFNSHQLIQFIDQQNPLAELTNKRRISAMGPGGISREDPNLDIRDVHHSHYSRICPIETPEGMNIGLIMSLASLAKVDENGFIVAPYYVVEDGVVKEECKYLTAHEDDNYIIAESSVQLDENKRILDEQVVARYRGSTGLFSPHEVDFIDIVPKQVVSIAASAIPFIENDDGARALMGSNMQRQATPLIKPYAPIVGTGTEFKIAHDSGMAVVAKNDGVVEFVDSQKIVIKNDNDKLDEYKLIKYRKSNQDTCNNQIPIVKIGQKVHKSETIGDGPAMQNGELALGRNILVGYTTWRGYNFEDAIIISERLVDQDVFTSIHIDEHTIQCMKTKNGDEEITRDMPNVSDTAKRFLDNQGIVLVGAEVHEGDVLVGKTTPRGNVETAPEDRLLQTIFGDKSKTVKDSSLKVKHGQEGIVAAVKRIKSTDENGSELPDDVIEIIKVYIVQKRKIQVGDKMAGRHGNKGIVSKVVPIQDMPFLKDGTPLDIMLNPLGVPSRMNIGQILELHLGYAAAEIGKKQLIQIAIDQLGYEKYISLFGINEIIAKKLYEKITNLIKHKQAKQPKDIDLIDITIVLKELGLSYDDIGIKISTPVFDGANHDDIVDIMNEANIDIENNKGKQVLYDGRTGEAFDGLISVGLTYMLKLDHMVDDKIHSRSVGPYSKITQQPLGGKSQNGGQRFGEMEVWALEAYGAAYNLLEILTIKSDDVQGRNQAYNAIIKGHDVVADGMPESFKLLTKQMQGLGLCITVETKDDRMIDINEYTLNQNRLNNDDDEVIFDESIKEINENNQQVFNTDFNDNDYDDEENF.

The protein belongs to the RNA polymerase beta chain family. As to quaternary structure, the RNAP catalytic core consists of 2 alpha, 1 beta, 1 beta' and 1 omega subunit. When a sigma factor is associated with the core the holoenzyme is formed, which can initiate transcription.

It carries out the reaction RNA(n) + a ribonucleoside 5'-triphosphate = RNA(n+1) + diphosphate. In terms of biological role, DNA-dependent RNA polymerase catalyzes the transcription of DNA into RNA using the four ribonucleoside triphosphates as substrates. In Ureaplasma urealyticum serovar 10 (strain ATCC 33699 / Western), this protein is DNA-directed RNA polymerase subunit beta.